We begin with the raw amino-acid sequence, 222 residues long: MDINFSQNEARVIGCLLEKEVTTPDQYPLTLNALTTACNQKSNREPVMALDEATVLDTVELLKEKRLINDVSSFGSRVSKFQHRFCNTEFGSLKFTSQEFAAVCVMLLRGPQSAGEIRTRTNRLCTFSDVKEVEAMLDGLAEHAKGPYVVKLPRESGKRDCRYMHLFSGEVDVEALAAAVKSTSTAGLASANNERFAELEEDMKAMKLEIAELKELLESLTS.

The protein belongs to the UPF0502 family.

In Photobacterium profundum (strain SS9), this protein is UPF0502 protein PBPRB0676.